The chain runs to 189 residues: Protein jagunal homolog (189 aa).

Topologically, residues 1-34 (MSSRGVRAAGTDGTDFQNRQRVAQHYQESAQYKS) are cytoplasmic. The chain crosses the membrane as a helical span at residues 35–55 (ILKWFFVPHFLILVFMWLKVG). Residues 56 to 78 (SELLRTNFGWKNAFFDRLDMPSA) are Lumenal-facing. The chain crosses the membrane as a helical span at residues 79–99 (YPWEYVWCFSFIPIVLAIYSF). Topologically, residues 100 to 105 (QRNKLK) are cytoplasmic. The chain crosses the membrane as a helical span at residues 106–126 (ILHYAYYAEFVVGIFPCMIGL). At 127–150 (GGQLPELMEYAQDMEGSNTPTFKG) the chain is on the lumenal side. Residues 151 to 171 (IFPMVIIWYIFFAVALQIHGF) form a helical membrane-spanning segment. Residues 172–189 (SMYFMHHLAAAWAPVKRD) lie on the Cytoplasmic side of the membrane.

Belongs to the jagunal family.

It localises to the endoplasmic reticulum membrane. This chain is Protein jagunal homolog, found in Caenorhabditis elegans.